The chain runs to 210 residues: Pyridoxine/pyridoxamine 5'-phosphate oxidase (210 aa).

Substrate is bound by residues 7–10 (REDY) and Lys-65. FMN is bound by residues 60-65 (RMVLLK), 75-76 (FT), Arg-81, Lys-82, and Gln-104. 3 residues coordinate substrate: Tyr-122, Arg-126, and Ser-130. Residues 139 to 140 (QS) and Trp-183 each bind FMN. Substrate is bound at residue 189 to 191 (RLH). Residue Arg-193 coordinates FMN.

The protein belongs to the pyridoxamine 5'-phosphate oxidase family. Homodimer. Requires FMN as cofactor.

It catalyses the reaction pyridoxamine 5'-phosphate + O2 + H2O = pyridoxal 5'-phosphate + H2O2 + NH4(+). The enzyme catalyses pyridoxine 5'-phosphate + O2 = pyridoxal 5'-phosphate + H2O2. It functions in the pathway cofactor metabolism; pyridoxal 5'-phosphate salvage; pyridoxal 5'-phosphate from pyridoxamine 5'-phosphate: step 1/1. The protein operates within cofactor metabolism; pyridoxal 5'-phosphate salvage; pyridoxal 5'-phosphate from pyridoxine 5'-phosphate: step 1/1. In terms of biological role, catalyzes the oxidation of either pyridoxine 5'-phosphate (PNP) or pyridoxamine 5'-phosphate (PMP) into pyridoxal 5'-phosphate (PLP). This chain is Pyridoxine/pyridoxamine 5'-phosphate oxidase, found in Neisseria gonorrhoeae (strain ATCC 700825 / FA 1090).